Here is a 238-residue protein sequence, read N- to C-terminus: Neuromodulin (238 aa).

A disordered region spans residues 1–238; it reads MLCCMRRTKQ…EEPEADQEHA (238 aa). 2 S-palmitoyl cysteine lipidation sites follow: Cys-3 and Cys-4. A compositionally biased stretch (basic and acidic residues) spans 9–32; sequence KQVEKNDEDQKIEQDGIKPEDKAH. The IQ domain maps to 31–60; it reads AHKAATKIQASFRGHITRKKLKGEKKDDAQ. Phosphoserine; by PHK and PKC is present on Ser-41. The segment covering 54–83 has biased composition (basic and acidic residues); the sequence is EKKDDAQAAEAEANKKDEAPVADGVEKKGE. Residues 84–95 are compositionally biased toward low complexity; sequence GTTATEAAPATG. Over residues 97–116 the composition is skewed to basic and acidic residues; the sequence is KPDEPGKAGETPSEEKKGEG. Residues 119–130 show a composition bias toward low complexity; the sequence is ATEQAAPQAPAS. The segment covering 139–154 has biased composition (polar residues); it reads ETESATKASTDNSPSS. A phosphoserine mark is found at Ser-151, Ser-153, and Ser-154. Residues 155–167 show a composition bias toward basic and acidic residues; sequence KAEDAPAKEEPKQ. Residues 168–199 show a composition bias toward low complexity; it reads ADVPAAVTAAAATTPAAEDAAAKATAQPPTET. A Phosphothreonine modification is found at Thr-181. Residues Ser-202 and Ser-203 each carry the phosphoserine; by CK2 modification. Residues 213–225 show a composition bias toward basic and acidic residues; that stretch reads DETKPKESARQDE. The segment covering 226–238 has biased composition (acidic residues); it reads GKEEEPEADQEHA.

This sequence belongs to the neuromodulin family. Identified in a complex containing FGFR4, NCAM1, CDH2, PLCG1, FRS2, SRC, SHC1, GAP43 and CTTN. Interacts (via IQ domain) with calmodulin. Binds calmodulin with a greater affinity in the absence of Ca(2+) than in its presence. In terms of processing, phosphorylated. Phosphorylation of this protein by a protein kinase C is specifically correlated with certain forms of synaptic plasticity. Palmitoylated by ZDHHC3. Palmitoylation is regulated by ARF6 and is essential for plasma membrane association and axonal and dendritic filopodia induction. Deacylated by LYPLA2.

It localises to the cell membrane. It is found in the cell projection. Its subcellular location is the growth cone membrane. The protein localises to the synapse. The protein resides in the filopodium membrane. It localises to the perikaryon. It is found in the dendrite. Its subcellular location is the axon. The protein localises to the cytoplasm. This protein is associated with nerve growth. It is a major component of the motile 'growth cones' that form the tips of elongating axons. Plays a role in axonal and dendritic filopodia induction. The sequence is that of Neuromodulin (GAP43) from Macaca fascicularis (Crab-eating macaque).